A 23-amino-acid chain; its full sequence is Toxin Acra2 (23 aa).

One can recognise an LCN-type CS-alpha/beta domain in the interval 2–23 (KDGYIVDSNGCAPECFPTNXGC).

In terms of processing, contains 4 disulfide bonds. Expressed by the venom gland.

The protein resides in the secreted. Excitatory insect toxins induce a spastic paralysis. They bind voltage-independently at site-4 of sodium channels (Nav) and shift the voltage of activation toward more negative potentials thereby affecting sodium channel activation and promoting spontaneous and repetitive firing. Is lethal to mice. Is about 1% of the total protein in the venom. This chain is Toxin Acra2, found in Androctonus crassicauda (Arabian fat-tailed scorpion).